The primary structure comprises 225 residues: 3-dehydroquinate dehydratase (225 aa).

3-dehydroquinate is bound by residues 30–32 and Arg-62; that span reads EWR. His-118 serves as the catalytic Proton donor/acceptor. The active-site Schiff-base intermediate with substrate is Lys-143. 3-dehydroquinate is bound by residues Arg-186, Ser-205, and Gln-209.

Belongs to the type-I 3-dehydroquinase family. As to quaternary structure, homodimer.

The enzyme catalyses 3-dehydroquinate = 3-dehydroshikimate + H2O. It participates in metabolic intermediate biosynthesis; chorismate biosynthesis; chorismate from D-erythrose 4-phosphate and phosphoenolpyruvate: step 3/7. Functionally, involved in the third step of the chorismate pathway, which leads to the biosynthesis of aromatic amino acids. Catalyzes the cis-dehydration of 3-dehydroquinate (DHQ) and introduces the first double bond of the aromatic ring to yield 3-dehydroshikimate. In Streptococcus thermophilus (strain ATCC BAA-491 / LMD-9), this protein is 3-dehydroquinate dehydratase.